Consider the following 274-residue polypeptide: 4-deoxy-L-threo-5-hexosulose-uronate ketol-isomerase (274 aa).

Residues H192, H194, E199, and H241 each contribute to the Zn(2+) site.

The protein belongs to the KduI family. The cofactor is Zn(2+).

It carries out the reaction 5-dehydro-4-deoxy-D-glucuronate = 3-deoxy-D-glycero-2,5-hexodiulosonate. It participates in glycan metabolism; pectin degradation; 2-dehydro-3-deoxy-D-gluconate from pectin: step 4/5. Functionally, catalyzes the isomerization of 5-dehydro-4-deoxy-D-glucuronate to 3-deoxy-D-glycero-2,5-hexodiulosonate. This is 4-deoxy-L-threo-5-hexosulose-uronate ketol-isomerase from Shigella boydii serotype 18 (strain CDC 3083-94 / BS512).